The primary structure comprises 229 residues: Large ribosomal subunit protein uL1 (229 aa).

Belongs to the universal ribosomal protein uL1 family. Part of the 50S ribosomal subunit.

Functionally, binds directly to 23S rRNA. The L1 stalk is quite mobile in the ribosome, and is involved in E site tRNA release. Its function is as follows. Protein L1 is also a translational repressor protein, it controls the translation of the L11 operon by binding to its mRNA. This chain is Large ribosomal subunit protein uL1, found in Phenylobacterium zucineum (strain HLK1).